Consider the following 1391-residue polypeptide: Periaxin (1391 aa).

S7 is modified (phosphoserine). Positions 16–99 (LVEIIVETEA…YKVSFCLKRT (84 aa)) constitute a PDZ domain. The Nuclear export signal motif lies at 70–84 (VFFENFKYEDALRLL). The Nuclear localization signal signature appears at 118–196 (KGPRAKVAKL…RLQLPRLRVR (79 aa)). S243 carries the phosphoserine modification. 12 tandem repeats follow at residues 432–436 (GPEVK), 440–444 (GPEVK), 448–452 (VPEVK), 456–460 (VPEAA), 464–468 (VQLPE), 469–473 (VQLPK), 474–478 (MSDMK), 482–486 (IPEMV), 487–491 (VPDVR), 495–499 (VQLPK), 500–504 (VPEMK), and 508–512 (MKLPK). Residues 432-719 (GPEVKAPTGP…MQVSQVPEVQ (288 aa)) form a 45 X 5 AA approximate tandem repeats of [LVMGIED]-[PQSKHARMI]-[EDKLVTR]-[LIVMAP]-[AQKHRPEVSD]; that may have a tripeptide spacer of [LVIDEA]-[PMSVI]-[KEATDQ] region. The 13; approximate repeat unit spans residues 513–517 (WPEMA). 32 consecutive repeat copies span residues 521–525 (VHLPD), 526–530 (VQLPK), 534–538 (MKLPK), 539–543 (VPEMA), 547–551 (VHLPD), 552–556 (VQLPK), 560–564 (MKLPE), 565–569 (MKLPK), 573–577 (MAVPD), 578–582 (VRLPE), 583–587 (VQLPK), 591–595 (VKLPK), 596–600 (MPEMA), 601–605 (VPDVH), 609–613 (LQLPK), 614–618 (MSEVK), 619–623 (LPKMP), 627–631 (VPDVR), 632–636 (LPEVQ), 637–641 (LPKVS), 645–649 (LPKMP), 650–654 (EMTMP), 655–659 (DIRLP), 663–667 (LPKVP), 671–675 (LPEMK), 676–680 (LPEIK), 684–688 (VPDMA), 689–693 (VPDVP), 697–701 (LQLPK), 702–706 (VSDIR), 707–711 (LPEMQ), and 715–719 (VPEVQ). Residues S848, S979, S1028, S1279, S1283, S1285, S1293, S1331, and S1337 each carry the phosphoserine modification. A disordered region spans residues 1267 to 1366 (LPRVGFSQSE…DREEGGFRVR (100 aa)). Residues 1275–1285 (SESVSGEGSPS) show a composition bias toward low complexity. Over residues 1354 to 1363 (GSRDREEGGF) the composition is skewed to basic and acidic residues. Residue S1369 is modified to Phosphoserine.

This sequence belongs to the periaxin family. As to quaternary structure, homodimer (via PDZ domain). Interacts with SCN10A. Found in a complex with SCN10A. Interacts with DRP2. Identified in a dystroglycan complex that contains at least PRX, DRP2, UTRN, DMD and DAG1. Detected in a complex composed of at least EZR, AHNAK, PPL and PRX. Identified in a complex with EZR, AHNAK, BFSP1, BFSP2, ANK2, PLEC, VIM and spectrin. Detected in myelinating Schwann cells in intramuscular nerves in triangularis sterni. Detected in sciatic nerve. Detected in eye lens fiber cells. Isoform 1 is detected in myelinating Schwann cells in sciatic nerve. Isoform 2 is detected in myelinating Schwann cells in sciatic nerve (at protein level). Detected in sciatic nerve.

It is found in the cell membrane. Its subcellular location is the cell junction. The protein localises to the nucleus. The protein resides in the cytoplasm. Functionally, scaffolding protein that functions as part of a dystroglycan complex in Schwann cells, and as part of EZR and AHNAK-containing complexes in eye lens fiber cells. Required for the maintenance of the peripheral myelin sheath that is essential for normal transmission of nerve impulses and normal perception of sensory stimuli. Required for normal transport of MBP mRNA from the perinuclear to the paranodal regions. Required for normal remyelination after nerve injury. Required for normal elongation of Schwann cells and normal length of the internodes between the nodes of Ranvier. The demyelinated nodes of Ranvier permit saltatory transmission of nerve impulses; shorter internodes cause slower transmission of nerve impulses. Required for the formation of appositions between the abaxonal surface of the myelin sheath and the Schwann cell plasma membrane; the Schwann cell cytoplasm is restricted to regions between these appositions. Required for the formation of Cajal bands and of Schmidt-Lanterman incisures that correspond to short, cytoplasm-filled regions on myelinated nerves. Recruits DRP2 to the Schwann cell plasma membrane. Required for normal protein composition of the eye lens fiber cell plasma membrane and normal eye lens fiber cell morphology. This Mus musculus (Mouse) protein is Periaxin (Prx).